The following is a 213-amino-acid chain: Calcium-dependent cell adhesion molecule 1 (213 aa).

4 tandem repeats follow at residues 1 to 48 (MSVD…LVGS), 49 to 97 (NVRC…GAFQ), 98 to 146 (WAVD…LTPP), and 147 to 194 (DSEI…FPKN). The 4 X approximate tandem repeats stretch occupies residues 1–194 (MSVDANKVKF…IKKDETFPKN (194 aa)).

This sequence belongs to the Dictyostelium CAD family. Post-translationally, the N-terminus is blocked.

Its subcellular location is the cell membrane. In terms of biological role, mediates calcium-dependent cell-cell adhesion during the early stage of development. This chain is Calcium-dependent cell adhesion molecule 1 (cadA), found in Dictyostelium discoideum (Social amoeba).